We begin with the raw amino-acid sequence, 89 residues long: Small ribosomal subunit protein uS15 (89 aa).

Belongs to the universal ribosomal protein uS15 family. Part of the 30S ribosomal subunit. Forms a bridge to the 50S subunit in the 70S ribosome, contacting the 23S rRNA.

Functionally, one of the primary rRNA binding proteins, it binds directly to 16S rRNA where it helps nucleate assembly of the platform of the 30S subunit by binding and bridging several RNA helices of the 16S rRNA. Its function is as follows. Forms an intersubunit bridge (bridge B4) with the 23S rRNA of the 50S subunit in the ribosome. This is Small ribosomal subunit protein uS15 from Thermobifida fusca (strain YX).